Here is a 248-residue protein sequence, read N- to C-terminus: Granulin (248 aa).

The protein belongs to the polyhedrin family.

In terms of biological role, component of the virus occlusion bodies, which are large proteinaceous structures, that protect the virus from the outside environment for extended periods until they are ingested by insect larvae. In Choristoneura fumiferana (Spruce budworm moth), this protein is Granulin.